We begin with the raw amino-acid sequence, 150 residues long: Transcriptional repressor NrdR (150 aa).

A zinc finger lies at 3–33 (CPFCGGESRVLESRPASDEEAVRRRRECLAC). One can recognise an ATP-cone domain in the interval 48-138 (LIVVKKDGRR…VYREFKDLNE (91 aa)).

This sequence belongs to the NrdR family. It depends on Zn(2+) as a cofactor.

Its function is as follows. Negatively regulates transcription of bacterial ribonucleotide reductase nrd genes and operons by binding to NrdR-boxes. The chain is Transcriptional repressor NrdR from Symbiobacterium thermophilum (strain DSM 24528 / JCM 14929 / IAM 14863 / T).